Reading from the N-terminus, the 191-residue chain is Pyridoxal 5'-phosphate synthase subunit PdxT (191 aa).

Residue 52-54 coordinates L-glutamine; it reads GES. Residue cysteine 81 is the Nucleophile of the active site. L-glutamine-binding positions include arginine 108 and 136–137; that span reads IR. Active-site charge relay system residues include histidine 172 and glutamate 174.

This sequence belongs to the glutaminase PdxT/SNO family. In the presence of PdxS, forms a dodecamer of heterodimers. Only shows activity in the heterodimer.

It catalyses the reaction aldehydo-D-ribose 5-phosphate + D-glyceraldehyde 3-phosphate + L-glutamine = pyridoxal 5'-phosphate + L-glutamate + phosphate + 3 H2O + H(+). The catalysed reaction is L-glutamine + H2O = L-glutamate + NH4(+). It functions in the pathway cofactor biosynthesis; pyridoxal 5'-phosphate biosynthesis. Catalyzes the hydrolysis of glutamine to glutamate and ammonia as part of the biosynthesis of pyridoxal 5'-phosphate. The resulting ammonia molecule is channeled to the active site of PdxS. This chain is Pyridoxal 5'-phosphate synthase subunit PdxT, found in Actinobacillus pleuropneumoniae serotype 7 (strain AP76).